We begin with the raw amino-acid sequence, 414 residues long: Coenzyme A biosynthesis bifunctional protein CoaBC (414 aa).

The tract at residues 1–191 (MSARKRIVVG…ALPYDMAGVK (191 aa)) is phosphopantothenoylcysteine decarboxylase. Residues 192–414 (ALVTAGGTRE…IAAFLKSQDG (223 aa)) are phosphopantothenate--cysteine ligase. CTP-binding positions include 275-277 (MAA), Asp-281, Lys-291, 293-294 (KK), 308-311 (DDVL), Phe-332, Lys-350, and Lys-354.

This sequence in the N-terminal section; belongs to the HFCD (homo-oligomeric flavin containing Cys decarboxylase) superfamily. In the C-terminal section; belongs to the PPC synthetase family. In terms of assembly, homododecamer. It depends on Mg(2+) as a cofactor. FMN is required as a cofactor.

It carries out the reaction N-[(R)-4-phosphopantothenoyl]-L-cysteine + H(+) = (R)-4'-phosphopantetheine + CO2. The catalysed reaction is (R)-4'-phosphopantothenate + L-cysteine + CTP = N-[(R)-4-phosphopantothenoyl]-L-cysteine + CMP + diphosphate + H(+). It participates in cofactor biosynthesis; coenzyme A biosynthesis; CoA from (R)-pantothenate: step 2/5. Its pathway is cofactor biosynthesis; coenzyme A biosynthesis; CoA from (R)-pantothenate: step 3/5. Two related chemical scaffolds that potently inhibit the activity of the CoaB moiety of CoaBC through a cryptic allosteric site that sits in the dimer interface region of the CoaB enzyme were identified. Its function is as follows. Catalyzes two sequential steps in the biosynthesis of coenzyme A. In the first step cysteine is conjugated to 4'-phosphopantothenate to form 4-phosphopantothenoylcysteine. In the second step the latter compound is decarboxylated to form 4'-phosphopantotheine. The sequence is that of Coenzyme A biosynthesis bifunctional protein CoaBC from Mycolicibacterium smegmatis (strain ATCC 700084 / mc(2)155) (Mycobacterium smegmatis).